We begin with the raw amino-acid sequence, 632 residues long: Phospholipid:diacylglycerol acyltransferase (632 aa).

Residues 1–15 (MASSKKSKTHKKKKE) are compositionally biased toward basic residues. A disordered region spans residues 1–47 (MASSKKSKTHKKKKEVKSPIDLPNSKKPTRALSEQPSASETQSVSNK). Topologically, residues 1 to 56 (MASSKKSKTHKKKKEVKSPIDLPNSKKPTRALSEQPSASETQSVSNKSRKSKFGKR) are cytoplasmic. Polar residues predominate over residues 32-46 (LSEQPSASETQSVSN). The helical transmembrane segment at 57 to 77 (LNFILGAILGICGAFFFAVGD) threads the bilayer. The Lumenal segment spans residues 78–632 (DNAVFDPATL…NEINLDKPRN (555 aa)). Aspartate 136 is a substrate binding site. The Acyl-ester intermediate role is filled by serine 293. Position 294 (methionine 294) interacts with substrate. Residues aspartate 535 and histidine 586 each act as charge relay system in the active site.

This sequence belongs to the AB hydrolase superfamily. Lipase family.

It is found in the endoplasmic reticulum membrane. The enzyme catalyses a glycerophospholipid + a 1,2-diacyl-sn-glycerol = a monoacylglycerophospholipid + a triacyl-sn-glycerol. Its pathway is glycerolipid metabolism; triacylglycerol biosynthesis. Functionally, catalyzes triacylglycerol (TAG) formation by an acyl-CoA independent pathway. The enzyme specifically transfers acyl groups from the sn-2 position of a phospholipid to diacylglycerol (DAG), thus forming an sn-1-lysophospholipid. Plays a major role in triacylglycerol formation at log phase. Involved in lipid particle synthesis from the endoplasmic reticulum, promoting localized TAG production at discrete ER subdomains. This chain is Phospholipid:diacylglycerol acyltransferase (plh1), found in Schizosaccharomyces pombe (strain 972 / ATCC 24843) (Fission yeast).